Here is a 974-residue protein sequence, read N- to C-terminus: Receptor-like protein 7 (974 aa).

A signal peptide spans 1 to 24 (MSFLIRSICFLILIPSFLITFVSA). Residues 25–930 (TQHLCHSDQK…EEEEEESFSW (906 aa)) are Extracellular-facing. 2 N-linked (GlcNAc...) asparagine glycosylation sites follow: Asn-54 and Asn-90. LRR repeat units lie at residues 96-120 (LRHL…EFDK), 122-145 (TGLE…LLQL), 147-166 (KLVS…SFHY), 181-204 (LRNL…EFSN), 206-229 (RSLR…ILLI), and 230-252 (PNLQ…VFHE). The N-linked (GlcNAc...) asparagine glycan is linked to Asn-253. LRR repeat units follow at residues 254 to 277 (NSLL…ISSL), 278 to 301 (KNLT…LGNL), 302 to 325 (SHLS…IGNL), 327 to 349 (QLTN…LSNL), and 350 to 373 (TKLN…ISQL). 2 N-linked (GlcNAc...) asparagine glycosylation sites follow: Asn-279 and Asn-300. Residue Asn-348 is glycosylated (N-linked (GlcNAc...) asparagine). Residues 374 to 396 (SKLKFFFADDNPFIGAILSPLLK) form an LRR 12; degenerate repeat. LRR repeat units lie at residues 397-422 (IPSL…IFML), 425-448 (LETF…VFSS), 454-472 (TLYI…SDFP), 473-495 (SNLE…IRKG), 496-519 (RNLQ…LWRM), 521-542 (TLNS…VKAS), 544-570 (ESQL…SLRY), 572-589 (SGSN…ICGL), 590-616 (SSLE…LMSS), 618-638 (SDLD…FMNA), 639-662 (TKLR…LTGC), 664-685 (SLEV…ELNS), 687-712 (QKLQ…VWFG), 713-737 (FPQL…YFMN), 785-809 (LTIY…IGLL), 810-833 (KELR…LANL), 834-857 (KNLE…LGTL), and 859-882 (SLAW…QFQR). Asn-434, Asn-466, and Asn-484 each carry an N-linked (GlcNAc...) asparagine glycan. Asn-529 is a glycosylation site (N-linked (GlcNAc...) asparagine). 4 N-linked (GlcNAc...) asparagine glycosylation sites follow: Asn-577, Asn-603, Asn-624, and Asn-637. N-linked (GlcNAc...) asparagine glycosylation occurs at Asn-737. N-linked (GlcNAc...) asparagine glycans are attached at residues Asn-816, Asn-845, and Asn-864. Positions 899-923 (LENVCGHIKESTPTQTEPLETKEEE) are disordered. The chain crosses the membrane as a helical span at residues 931-951 (IAAGLGFAPGVVFGLAMGYIV). Residues 952-974 (VSYKHQWFMKTFGRSKQQNTRTR) lie on the Cytoplasmic side of the membrane.

This sequence belongs to the RLP family.

It is found in the cell membrane. In Arabidopsis thaliana (Mouse-ear cress), this protein is Receptor-like protein 7.